Consider the following 248-residue polypeptide: Probable transcriptional regulatory protein Mpop_0922 (248 aa).

The protein belongs to the TACO1 family.

The protein resides in the cytoplasm. This Methylorubrum populi (strain ATCC BAA-705 / NCIMB 13946 / BJ001) (Methylobacterium populi) protein is Probable transcriptional regulatory protein Mpop_0922.